A 1004-amino-acid polypeptide reads, in one-letter code: uncharacterized protein (1004 aa).

The N-linked (GlcNAc...) asparagine glycan is linked to N27. A run of 4 helical transmembrane segments spans residues 38 to 58, 77 to 97, 188 to 208, and 324 to 344; these read FGFSLNPVLWCLDHQQGLLAI, IVPDCSTIVHIALCAAYLIVI, LSPVVSVQIHPKDLGVILIAY, and FILMLGGLPKEAPVKGISLFS. N-linked (GlcNAc...) asparagine glycans are attached at residues N392, N418, and N421. 2 helical membrane passes run 422–442 and 599–619; these read MSLSIPPSLCFLASDFRVIAF and MSNIGFVCIGYQDGGITIIDM. The N-linked (GlcNAc...) asparagine glycan is linked to N627. 2 helical membrane passes run 726–746 and 823–843; these read GYPLPQEVFLVYIGDSGISVF and GDYIFPTLGAHELAFGCVLGS. An N-linked (GlcNAc...) asparagine glycan is attached at N859.

This sequence to yeast YPR031w.

The protein resides in the membrane. This is an uncharacterized protein from Schizosaccharomyces pombe (strain 972 / ATCC 24843) (Fission yeast).